The sequence spans 370 residues: Natural killer cell receptor 2B4 (370 aa).

The N-terminal stretch at 1 to 21 (MLGQVVTLILLLLLKVYQGKG) is a signal peptide. Ig-like domains follow at residues 22 to 127 (CQGS…FVFE) and 131 to 215 (PDKV…LNLT). At 22–229 (CQGSADHVVS…NAHQEFRFWP (208 aa)) the chain is on the extracellular side. Asparagine 71, asparagine 77, asparagine 89, asparagine 164, asparagine 181, asparagine 192, asparagine 200, and asparagine 213 each carry an N-linked (GlcNAc...) asparagine glycan. A disulfide bridge links cysteine 157 with cysteine 199. The helical transmembrane segment at 230-250 (FLVIIVILSALFLGTLACFCV) threads the bilayer. Residues 251–370 (WRRKRKEKQS…KELENFDVYS (120 aa)) lie on the Cytoplasmic side of the membrane. 4 short sequence motifs (ITSM) span residues 269-274 (TIYEDV), 295-300 (TIYSMI), 315-320 (TLYSLI), and 340-345 (TIYEVI). At tyrosine 271 the chain carries Phosphotyrosine. Position 297 is a phosphotyrosine; by FYN (tyrosine 297). Tyrosine 317 carries the post-translational modification Phosphotyrosine. Residues 324–370 (RKSGSRKRNHSPSFNSTIYEVIGKSQPKAQNPARLSRKELENFDVYS) are disordered. Residue tyrosine 342 is modified to Phosphotyrosine; by FYN.

As to quaternary structure, interacts with CD48. Interacts (via phosphorylated ITSM 1-4) with SH2D1A (via SH2 domain); SH2D1A probably mediates association with FYN. Interacts (via phosphorylated ITSM 3) with PTPN11/SHP-2, INPP5D/SHIP1, PTPN6/SHP-1 and CSK; binding of SH2D1A/SAP prevents association with PTPN11, PTPN6 and CSK; conflictingly a similar association has been described for phosphorylated ITSM 1 also including GRB2 and PLCG1. Interacts weakly (via phosphorylated ITSM 2) with PTPN11/SHP-2 and CSK. Interacts with SH2D1B. Interacts with PIK3R1; PI3K recruits SH2D1A. Interacts with MHC class I proteins; the interaction is proposed to prevent self-killing of NK cells. N-linked glycosylation is essential for the binding to its ligand CD48. Also O-glycosylated, in contrast, O-linked sialylation has a negative impact on ligand binding. In terms of processing, phosphorylated by FYN and CSK on tyrosine residues following activation. Coligation with inhibitory receptors such as KIR2DL1 inhibits phosphorylation upon contact of NK cells with sensitive target cells. Expressed in spleen, PBL, followed by lung, liver, testis and small intestine. Expressed in all natural killer (NK) cells, monocytes and basophils, TCR-gamma/delta+ T-cells, monocytes, basophils, and on a subset of CD8(+) T-cells.

Its subcellular location is the membrane. The protein localises to the cell membrane. It is found in the membrane raft. Heterophilic receptor of the signaling lymphocytic activation molecule (SLAM) family; its ligand is CD48. SLAM receptors triggered by homo- or heterotypic cell-cell interactions are modulating the activation and differentiation of a wide variety of immune cells and thus are involved in the regulation and interconnection of both innate and adaptive immune response. Activities are controlled by presence or absence of small cytoplasmic adapter proteins, SH2D1A/SAP and/or SH2D1B/EAT-2. Acts as activating natural killer (NK) cell receptor. Activating function implicates association with SH2D1A and FYN. Downstreaming signaling involves predominantly VAV1, and, to a lesser degree, INPP5D/SHIP1 and CBL. Signal attenuation in the absence of SH2D1A is proposed to be dependent on INPP5D and to a lesser extent PTPN6/SHP-1 and PTPN11/SHP-2. Stimulates NK cell cytotoxicity, production of IFN-gamma and granule exocytosis. Optimal expansion and activation of NK cells seems to be dependent on the engagement of CD244 with CD48 expressed on neighboring NK cells. Acts as costimulator in NK activation by enhancing signals by other NK receptors such as NCR3 and NCR1. At early stages of NK cell differentiation may function as an inhibitory receptor possibly ensuring the self-tolerance of developing NK cells. Involved in the regulation of CD8(+) T-cell proliferation; expression on activated T-cells and binding to CD48 provides costimulatory-like function for neighboring T-cells. Inhibits inflammatory responses in dendritic cells (DCs). The chain is Natural killer cell receptor 2B4 (CD244) from Homo sapiens (Human).